Here is a 389-residue protein sequence, read N- to C-terminus: MGAPTQIPIETSPLAWLDAVERQRRDAGLRRSLRPRPPVGTELDLASNDYLGLSQHPDVIEGGVQALRIWGAGATGSRLVTGDTELHQQLEAELAEYVGAAAGLLFSSGYTANLGAVVGLSGPGSLLVSDAYSHASLVDACRLSRARVVVTPHRDVAAVDAALASRDEQRAMVITDSVFSADGTLAPLRELLAACRRHRALLVIDEAHGLGVRGGGRGLLHELGLAGAPDVVLTTTLSKALGSQGGAVLGPAAVRAHLIDAARPFIFDTGLAPAAVGAARAALGVLKAEQWRPDAVLQNARELADICDVPETPQSAVVSVLLGDPEVALAAAAACLDAGVKVGCFRPPTVPAGTSRLRLTARASLSPDEMELARRVLTDVLLGPAAARR.

Position 31 (R31) interacts with substrate. Residue 109-110 participates in pyridoxal 5'-phosphate binding; it reads GY. H134 lines the substrate pocket. Pyridoxal 5'-phosphate contacts are provided by residues S180, 205–208, and 236–239; these read DEAH and TLSK. K239 bears the N6-(pyridoxal phosphate)lysine mark. T349 is a binding site for substrate.

It belongs to the class-II pyridoxal-phosphate-dependent aminotransferase family. BioF subfamily. In terms of assembly, homodimer. It depends on pyridoxal 5'-phosphate as a cofactor.

The catalysed reaction is 6-carboxyhexanoyl-[ACP] + L-alanine + H(+) = (8S)-8-amino-7-oxononanoate + holo-[ACP] + CO2. It functions in the pathway cofactor biosynthesis; biotin biosynthesis. Catalyzes the decarboxylative condensation of pimeloyl-[acyl-carrier protein] and L-alanine to produce 8-amino-7-oxononanoate (AON), [acyl-carrier protein], and carbon dioxide. The protein is 8-amino-7-oxononanoate synthase of Mycobacterium marinum (strain ATCC BAA-535 / M).